Consider the following 368-residue polypeptide: Ubl carboxyl-terminal hydrolase 18 (368 aa).

A mediates interaction with IFNAR2 region spans residues 31-48 (MKRKRVLSRDLCSAWDSP). A mediates interaction with STAT2 region spans residues 48–109 (PHGLVGLHNI…LLLLLEKMQD (62 aa)). One can recognise a USP domain in the interval 52–366 (VGLHNIGQTC…TAYLLVYTKT (315 aa)). The active-site Nucleophile is C61. A mediates interaction with STAT2 and necessary for the negative regulation of the type I IFN signaling pathway region spans residues 299–308 (ELFAVIAHVG). A mediates interaction with IFNAR2 region spans residues 309–368 (MADFGHYCAYIRNPVDGKWFCFNDSHVCWVTWKDVQCTYGNHRYRWRETAYLLVYTKTGS). The Proton acceptor role is filled by H314.

The protein belongs to the peptidase C19 family. Interacts with STAT2; the interaction is direct. Interacts with IFNAR2; indirectly via STAT2, it negatively regulates the assembly of the ternary interferon-IFNAR1-IFNAR2 complex and inhibits type I interferon signaling. Interacts with STING1. Interacts with USP20.

It catalyses the reaction Thiol-dependent hydrolysis of ester, thioester, amide, peptide and isopeptide bonds formed by the C-terminal Gly of ubiquitin (a 76-residue protein attached to proteins as an intracellular targeting signal).. In terms of biological role, interferon-induced ISG15-specific protease that plays a crucial role for maintaining a proper balance of ISG15-conjugated proteins in cells. Regulates protein ISGylation by efficiently cleaving ISG15 conjugates linked via isopeptide bonds. Regulates T-cell activation and T-helper 17 (Th17) cell differentiation by deubiquitinating TAK1, likely to keep TAK1-TAB complexes in steady conditions. In turn, restricts activation of NF-kappa-B, NFAT, and JNK as well as expression of IL2 in T-cells after TCR activation. Acts as a molecular adapter with USP20 to promote innate antiviral response through deubiquitinating STING1. Involved also in the negative regulation of the inflammatory response triggered by type I interferon. Upon recruitment by STAT2 to the type I interferon receptor subunit IFNAR2 interferes with the assembly of the ternary interferon-IFNAR1-IFNAR2 complex and acts as a negative regulator of the type I interferon signaling pathway. This is Ubl carboxyl-terminal hydrolase 18 (Usp18) from Mus musculus (Mouse).